The sequence spans 1726 residues: Transcription elongation factor SPT6 (1726 aa).

Composition is skewed to acidic residues over residues 1–18, 31–45, and 55–79; these read MSDF…EFEE, EEDE…EDQD, and DDDD…SDSG. 3 disordered regions span residues 1 to 196, 219 to 248, and 482 to 512; these read MSDF…KGKK, AEFD…KKQT, and EVSE…QASR. The residue at position 90 (Ser90) is a Phosphoserine. The segment covering 93–104 has biased composition (acidic residues); sequence DYLDDDDLDLIE. Residues 110 to 120 are compositionally biased toward basic residues; the sequence is KVKRRKKKYSR. Acidic residues-rich tracts occupy residues 146–157, 166–186, 219–240, and 484–501; these read GDGEGEVEDGEA, DEEE…DDDG, AEFD…DDES, and SEED…EEEE. The segment covering 502 to 512 has biased composition (basic and acidic residues); that stretch reads QKGPDLKQASR. Residues 806–865 are a coiled coil; it reads LKRRNAWREDEREKKQQDVENLKKFLLSKKPHVVAVSGENRDAHMVMEDIKRTISELEQN. The S1 motif domain maps to 1204 to 1273; it reads WNHFDSGSCP…EKFNVDLTCR (70 aa). The region spanning 1316–1426 is the SH2 domain; sequence YIKRVIAHPS…LLGHKYFHEC (111 aa). Thr1522 carries the post-translational modification Phosphothreonine. Phosphoserine is present on Ser1525. Residues 1611 to 1627 show a composition bias toward polar residues; sequence LMTPSYSYTTPGQQQAM. Positions 1611–1726 are disordered; the sequence is LMTPSYSYTT…ATPLLDEMDR (116 aa). Composition is skewed to low complexity over residues 1628-1640 and 1647-1656; these read TTPQ…PQSS and SSSTPSSSSS. The span at 1657–1669 shows a compositional bias: polar residues; it reads RVRTPQPKASSHT.

Belongs to the SPT6 family.

The protein resides in the nucleus. Functionally, histone H3-H4 chaperone that plays a role in maintenance of chromatin structure during RNA polymerase II transcription elongation. Promotes the activation of the myogenic gene program by entailing erasure of the repressive H3K27me3 epigenetic mark through stabilization of the chromatin interaction of the H3K27 demethylase KDM6A. Plays an important role during early patterning and somitogenesis of the embryo. The sequence is that of Transcription elongation factor SPT6 (supt6h) from Danio rerio (Zebrafish).